A 399-amino-acid chain; its full sequence is Odorant receptor 42b (399 aa).

Over 1–45 (MVFELIRPAPLTEQKRSRDGCIYLYRAMKFIGWLPPKQGVLRYVY) the chain is Cytoplasmic. Residues 46 to 66 (LTWTLMTFVWCTTYLPLGFLG) traverse the membrane as a helical segment. Residues 67 to 83 (SYMTQIKSFSPGEFLTS) are Extracellular-facing. The chain crosses the membrane as a helical span at residues 84 to 104 (LQVCINAYGSSVKVAITYSML). At 105 to 140 (WRLIKAKNILDQLDLRCTAMEEREKIHLVVARSNHA) the chain is on the cytoplasmic side. The helical transmembrane segment at 141–161 (FLIFTFVYCGYAGSTYLSSVL) threads the bilayer. Over 162 to 178 (SGRPPWQLYNPFIDWHD) the chain is Extracellular. A helical transmembrane segment spans residues 179-199 (GTLKLWVASTLEYMVMSGAVL). The Cytoplasmic segment spans residues 200-268 (QDQLSDSYPL…AIIKPVIQGT (69 aa)). A helical membrane pass occupies residues 269–289 (IFTQFLLIGLVLGFTLINVFF). The Extracellular segment spans residues 290 to 292 (FSD). A helical membrane pass occupies residues 293–313 (IWTGIASFMFVITILLQTFPF). Over 314-356 (CYTCNLIMEDCESLTHAIFQSNWVDASRRYKTTLLYFLQNVQQ) the chain is Cytoplasmic. A helical transmembrane segment spans residues 357–377 (PIVFIAGGIFQISMSSNISVA). The Extracellular portion of the chain corresponds to 378-399 (KFAFSVITITKQMNIADKFKTD).

This sequence belongs to the insect chemoreceptor superfamily. Heteromeric odorant receptor channel (TC 1.A.69) family. Or2a subfamily. Interacts with Orco. Complexes exist early in the endomembrane system in olfactory sensory neurons (OSNs), coupling these complexes to the conserved ciliary trafficking pathway. As to expression, expressed in olfactory sensory neurons in the antenna.

The protein localises to the cell membrane. Odorant receptor which mediates acceptance or avoidance behavior, depending on its substrates. The odorant receptor repertoire encodes a large collection of odor stimuli that vary widely in identity, intensity, and duration. May form a complex with Orco to form odorant-sensing units, providing sensitive and prolonged odorant signaling and calcium permeability. Involved in the behavioral responses to ethyl acetate and pentyl acetate. This chain is Odorant receptor 42b (Or42b), found in Drosophila melanogaster (Fruit fly).